The following is a 316-amino-acid chain: Pantothenate kinase (316 aa).

An ATP-binding site is contributed by 95-102; it reads GSVAVGKS.

The protein belongs to the prokaryotic pantothenate kinase family.

It localises to the cytoplasm. It carries out the reaction (R)-pantothenate + ATP = (R)-4'-phosphopantothenate + ADP + H(+). It functions in the pathway cofactor biosynthesis; coenzyme A biosynthesis; CoA from (R)-pantothenate: step 1/5. This Photorhabdus laumondii subsp. laumondii (strain DSM 15139 / CIP 105565 / TT01) (Photorhabdus luminescens subsp. laumondii) protein is Pantothenate kinase.